The following is a 133-amino-acid chain: Small ribosomal subunit protein uS8 (133 aa).

The protein belongs to the universal ribosomal protein uS8 family. As to quaternary structure, part of the 30S ribosomal subunit. Contacts proteins S5 and S12.

Its function is as follows. One of the primary rRNA binding proteins, it binds directly to 16S rRNA central domain where it helps coordinate assembly of the platform of the 30S subunit. This chain is Small ribosomal subunit protein uS8, found in Trichodesmium erythraeum (strain IMS101).